Consider the following 710-residue polypeptide: Polyribonucleotide nucleotidyltransferase (710 aa).

2 residues coordinate Mg(2+): Asp-487 and Asp-493. The 60-residue stretch at 554 to 613 (PRIHTMKISAEKIKDVIGKGGAVIRALTEETGTTIEIEDDGTIKIAATEGAAAKEAIRRI) folds into the KH domain. The 69-residue stretch at 623–691 (GRIYTGKVAR…RQGRVRLSMK (69 aa)) folds into the S1 motif domain. Residues 691 to 710 (KEAVEKPAEEANDASEAKGE) are disordered.

This sequence belongs to the polyribonucleotide nucleotidyltransferase family. As to quaternary structure, component of the RNA degradosome, which is a multiprotein complex involved in RNA processing and mRNA degradation. Mg(2+) serves as cofactor.

It is found in the cytoplasm. The enzyme catalyses RNA(n+1) + phosphate = RNA(n) + a ribonucleoside 5'-diphosphate. Its function is as follows. Involved in mRNA degradation. Catalyzes the phosphorolysis of single-stranded polyribonucleotides processively in the 3'- to 5'-direction. This Vibrio campbellii (strain ATCC BAA-1116) protein is Polyribonucleotide nucleotidyltransferase.